Here is a 623-residue protein sequence, read N- to C-terminus: Oviduct-specific glycoprotein (623 aa).

The N-terminal stretch at 1 to 21 (MWKLLLWVGLVLVLKHHDGAA) is a signal peptide. The GH18 domain occupies 22-385 (HKLVCYFTNW…YVMNDILVRA (364 aa)). C26 and C51 are oxidised to a cystine. Residues 71–72 (LQ), 98–101 (GGWN), Y142, 211–214 (LSYD), and W355 contribute to the chitin site. 2 N-linked (GlcNAc...) asparagine glycosylation sites follow: N402 and N441. Disordered regions lie at residues 539-558 (LTPV…VSPG) and 594-623 (RKIS…PQDG). A compositionally biased stretch (polar residues) spans 613–623 (TSETGTHPQDG).

The protein belongs to the glycosyl hydrolase 18 family. As to expression, oviduct.

The protein localises to the cytoplasmic vesicle. It is found in the secretory vesicle. Functionally, binds to oocyte zona pellucida in vivo. May play a role in the fertilization process and/or early embryonic development. The chain is Oviduct-specific glycoprotein (OVGP1) from Papio anubis (Olive baboon).